Reading from the N-terminus, the 421-residue chain is U-box domain-containing protein 25 (421 aa).

A U-box domain is found at 13 to 88 (QIPYHFRCPI…QEWCVANRSN (76 aa)).

It catalyses the reaction S-ubiquitinyl-[E2 ubiquitin-conjugating enzyme]-L-cysteine + [acceptor protein]-L-lysine = [E2 ubiquitin-conjugating enzyme]-L-cysteine + N(6)-ubiquitinyl-[acceptor protein]-L-lysine.. Its pathway is protein modification; protein ubiquitination. Functionally, functions as an E3 ubiquitin ligase. This chain is U-box domain-containing protein 25 (PUB25), found in Arabidopsis thaliana (Mouse-ear cress).